Consider the following 643-residue polypeptide: uncharacterized protein (643 aa).

Residues 561–643 are disordered; sequence LNQELETSSE…GADRKKRGVY (83 aa). Over residues 591-606 the composition is skewed to gly residues; sequence SRGGRGGRGARGGNRG. Over residues 617 to 635 the composition is skewed to basic and acidic residues; the sequence is GHDRQMKEKHKSDIKQRGA.

This is an uncharacterized protein from Caenorhabditis elegans.